The chain runs to 474 residues: 6-phospho-beta-galactosidase (474 aa).

D-galactose 6-phosphate is bound by residues Gln19, His116, Asn159, Glu160, and Asn297. The Proton donor role is filled by Glu160. Residue Glu375 is the Nucleophile of the active site. D-galactose 6-phosphate-binding residues include Ser433, Trp434, Lys440, and Tyr442.

Belongs to the glycosyl hydrolase 1 family.

It carries out the reaction a 6-phospho-beta-D-galactoside + H2O = D-galactose 6-phosphate + an alcohol. It participates in carbohydrate metabolism; lactose degradation; D-galactose 6-phosphate and beta-D-glucose from lactose 6-phosphate: step 1/1. This is 6-phospho-beta-galactosidase from Lacticaseibacillus rhamnosus (Lactobacillus rhamnosus).